The chain runs to 1417 residues: MNNGILHQNYNSKKFDIIKISLASPEVIRSWSHGEVKKPETINYRTFKPERDGLFCAKIFGPIKDYECLCGKYKRLKHRGVVCERCGVEVEQAKVRRERMGHIDLVCPVVHIWYLKSLPSRIGLFLDMPLKNVEKVLYFESYIVTDPGMTPLEKKQLLTDEEYAEALENYGYEFEASMGAEAIRDLLADTDIESEIELLQAECEESKSTAKKEKAIKRLRLLETFQASGNKPEWMVMTVLPVLPPDLRPLVPIEGGRFATSDLNDLYRRVINRNNRLKKLLDLNAPDIIVRNEKRMLQEAVDALLDNGRRGRAVTGSNKRPLKSLADMIKGKQGRFRQNLLGKRVDYSGRSVITVGPSLRLHECGLPKKMALELFKPFVYSKLRLGGHATTIKQAKRMVELEEAVVWDILETVINEHPVLLNRAPTLHRLGIQAFEPRLIEGKAIQLHPLVCAAFNADFDGDQMAVHVPLTVESQLEARVLMMSTNNILSPASGQPIITPTQDIVLGLYYITREKEGARGEGKLFSSYEDVSRAYNSGTIDIHAKIKLRIDRQVFDTKGNTYNEKGVVNTTVGRALLLNILPEGLSFSLLNKVLVKKEISKIINQAFRVLGGKATVVLADKLMYAGFKYSTLSGVSVGVDDMTIPDNKEAKIEEAEKEIKQITEQYQSSLITENERYNNIINIWSKTSDEVGASMMDAISKDTVSINGEKKEIESFNSVYMMAKSGARGSYNQMRQLAGMRGLMAKPDGTMIETAITANFREGLSVLQYFTSTHGARKGLADTALKTANAGYLTRRLVDVAQDLVVIEEDCGTDDGLMFSAIVEDGEVKVPLVERALGRTLAADVVTEKGVVLLEAGTLLDENLVELLDDNGIDMIKVRSPITCKTRRGLCAKCYGRDLARERQVNVGESVGVIAAQSIGEPGTQLTMRTFHTGGAASLGITVSDIKVKTAGKIKFKNIRTVTNKEGQEIVISRAGEIIVSDTMGRVREQHKIPMGAVVPLASGKAVEIGDVIATWDPHAQPLITDVAGKVVLEDVIDGITSKHTYDDLTGQQTIEITSISQRTTSKNLKPVVKIVDEKGAELKSIPLAVGAVLNVADDSILEVGDIVAKIPLEGSKNKDITGGLPRVAELFEARRPKDAAILSPCDGMVRLGNRDTKEKQRIEIIDKNGHIVEEILLPKSRHLVVFDGEQVSRGDVLADGPTDPHDLLKYKGLEEFADYILIEAQSVYRMQGVVINDKHIETIVRQMLRKAVILDEGDSKFVKDESIELVRILEENDKLRKQGKKEVEYELVLMGITRSSLSTESFLSAASFQETTRVLTEASINSQIDNLRGLKENVLIGRLIPTGTGLAVRKESAKIEKMREELGVEDNMVFTDLSSFNPEEISFDSIQSQKEDKDINEDIEESLRNALESLDF.

Zn(2+) contacts are provided by Cys-68, Cys-70, Cys-83, and Cys-86. Mg(2+) contacts are provided by Asp-458, Asp-460, and Asp-462. Zn(2+) is bound by residues Cys-811, Cys-884, Cys-891, and Cys-894.

Belongs to the RNA polymerase beta' chain family. In terms of assembly, the RNAP catalytic core consists of 2 alpha, 1 beta, 1 beta' and 1 omega subunit. When a sigma factor is associated with the core the holoenzyme is formed, which can initiate transcription. Requires Mg(2+) as cofactor. Zn(2+) is required as a cofactor.

The enzyme catalyses RNA(n) + a ribonucleoside 5'-triphosphate = RNA(n+1) + diphosphate. Its function is as follows. DNA-dependent RNA polymerase catalyzes the transcription of DNA into RNA using the four ribonucleoside triphosphates as substrates. This is DNA-directed RNA polymerase subunit beta' from Francisella tularensis subsp. tularensis (strain FSC 198).